The chain runs to 346 residues: tRNA N6-adenosine threonylcarbamoyltransferase (346 aa).

The Fe cation site is built by His-111 and His-115. Residues 134-138 (LVSGG), Asp-167, Gly-180, and Asn-279 contribute to the substrate site. Asp-307 provides a ligand contact to Fe cation.

The protein belongs to the KAE1 / TsaD family. Fe(2+) is required as a cofactor.

The protein resides in the cytoplasm. It catalyses the reaction L-threonylcarbamoyladenylate + adenosine(37) in tRNA = N(6)-L-threonylcarbamoyladenosine(37) in tRNA + AMP + H(+). Required for the formation of a threonylcarbamoyl group on adenosine at position 37 (t(6)A37) in tRNAs that read codons beginning with adenine. Is involved in the transfer of the threonylcarbamoyl moiety of threonylcarbamoyl-AMP (TC-AMP) to the N6 group of A37, together with TsaE and TsaB. TsaD likely plays a direct catalytic role in this reaction. The chain is tRNA N6-adenosine threonylcarbamoyltransferase from Burkholderia mallei (strain ATCC 23344).